A 300-amino-acid polypeptide reads, in one-letter code: NAD kinase (300 aa).

D80 functions as the Proton acceptor in the catalytic mechanism. NAD(+)-binding positions include 80 to 81 (DG), 154 to 155 (ND), R165, R182, D184, 195 to 200 (TAYALS), and Q253.

The protein belongs to the NAD kinase family. A divalent metal cation serves as cofactor.

Its subcellular location is the cytoplasm. The catalysed reaction is NAD(+) + ATP = ADP + NADP(+) + H(+). Its function is as follows. Involved in the regulation of the intracellular balance of NAD and NADP, and is a key enzyme in the biosynthesis of NADP. Catalyzes specifically the phosphorylation on 2'-hydroxyl of the adenosine moiety of NAD to yield NADP. This Aromatoleum aromaticum (strain DSM 19018 / LMG 30748 / EbN1) (Azoarcus sp. (strain EbN1)) protein is NAD kinase.